We begin with the raw amino-acid sequence, 716 residues long: Interleukin-31 receptor subunit alpha (716 aa).

An N-terminal signal peptide occupies residues 1-18; the sequence is MWTLALWAFSFLCKFSLA. Over 19–499 the chain is Extracellular; sequence VLPTKPENIS…TNGVRINFKT (481 aa). Fibronectin type-III domains are found at residues 23–115, 117–211, 213–304, 305–403, and 408–502; these read KPEN…IAKT, PPII…TMEE, PHVL…ILRI, PDVH…QAYA, and PLKG…TLSI. Residues Asn-36, Asn-48, and Asn-64 are each glycosylated (N-linked (GlcNAc...) asparagine). A glycan (N-linked (GlcNAc...) asparagine) is linked at Asn-382. A helical transmembrane segment spans residues 500–520; sequence LSISVFEIVLLTSLVGGGLLL. The Cytoplasmic portion of the chain corresponds to 521-716; the sequence is LSIKTVTFGL…NIPEHSKGEV (196 aa). Disordered stretches follow at residues 622 to 641 and 648 to 696; these read EYVT…FKEP and ASED…LKNS. Over residues 670-679 the composition is skewed to polar residues; it reads QPSSSCQSPG.

The protein belongs to the type I cytokine receptor family. Type 2 subfamily. As to quaternary structure, heterodimer with OSMR. Interacts with JAK1 and STAT3. N-glycosylated. As to expression, expressed in a subset of dorsal root ganglia neurons. Expressed in spinal cord and trigeminal ganglion (at protein level). Expressed in skin, testis, bone marrow and thymus.

Its subcellular location is the cell membrane. The protein resides in the presynaptic cell membrane. The protein localises to the cell projection. It is found in the axon. Associates with OSMR to form the interleukin-31 receptor which activates STAT3 and to a lower extent STAT1 and STAT5. May function in skin immunity. Mediates IL31-induced itch, probably in a manner dependent on cation channels TRPA1 and TRPV1. Positively regulates numbers and cycling status of immature subsets of myeloid progenitor cells in bone marrow in vivo and enhances myeloid progenitor cell survival in vitro. This is Interleukin-31 receptor subunit alpha (Il31ra) from Mus musculus (Mouse).